The chain runs to 152 residues: Lipoprotein signal peptidase (152 aa).

Transmembrane regions (helical) follow at residues leucine 5–valine 25, tryptophan 61–histidine 81, and leucine 84–isoleucine 104. Catalysis depends on residues aspartate 114 and aspartate 130. Residues isoleucine 125–tryptophan 145 form a helical membrane-spanning segment.

The protein belongs to the peptidase A8 family.

The protein resides in the cell membrane. The catalysed reaction is Release of signal peptides from bacterial membrane prolipoproteins. Hydrolyzes -Xaa-Yaa-Zaa-|-(S,diacylglyceryl)Cys-, in which Xaa is hydrophobic (preferably Leu), and Yaa (Ala or Ser) and Zaa (Gly or Ala) have small, neutral side chains.. Its pathway is protein modification; lipoprotein biosynthesis (signal peptide cleavage). Its function is as follows. This protein specifically catalyzes the removal of signal peptides from prolipoproteins. This chain is Lipoprotein signal peptidase, found in Streptococcus pyogenes serotype M1.